Here is a 72-residue protein sequence, read N- to C-terminus: DNA-directed RNA polymerase subunit omega (72 aa).

The protein belongs to the RNA polymerase subunit omega family. The RNAP catalytic core consists of 2 alpha, 1 beta, 1 beta' and 1 omega subunit. When a sigma factor is associated with the core the holoenzyme is formed, which can initiate transcription.

The catalysed reaction is RNA(n) + a ribonucleoside 5'-triphosphate = RNA(n+1) + diphosphate. Functionally, promotes RNA polymerase assembly. Latches the N- and C-terminal regions of the beta' subunit thereby facilitating its interaction with the beta and alpha subunits. This Francisella tularensis subsp. tularensis (strain FSC 198) protein is DNA-directed RNA polymerase subunit omega.